Consider the following 335-residue polypeptide: Transcription factor E2F5 (335 aa).

A compositionally biased stretch (low complexity) spans 1-18; it reads MAAAEPTSSAQPTPQAQA. Residues 1 to 40 are disordered; the sequence is MAAAEPTSSAQPTPQAQAQPPPHGAPSSQPSAALAGGSSR. A DNA-binding region spans residues 37–108; that stretch reads GSSRHEKSLG…KNSIQWKGVG (72 aa). Residues 66 to 88 are leucine-zipper; the sequence is LKAAADTLAVRQKRRIYDITNVL. Positions 71-108 match the DEF box motif; the sequence is DTLAVRQKRRIYDITNVLEGIDLIEKKSKNSIQWKGVG. The dimerization stretch occupies residues 109 to 205; it reads AGCNTKEVID…GQNGQKKYQI (97 aa). The disordered stretch occupies residues 226 to 285; that stretch reads SKPVVFPVPPPDDLTQPSSQSSTSVTPQKSTMAAQNLPEQHVSERSQTFQQTPAAEVSSG. A compositionally biased stretch (low complexity) spans 238-256; it reads DLTQPSSQSSTSVTPQKST. The interval 277 to 335 is transactivation; that stretch reads TPAAEVSSGSISGDIIDELMSSDVFPLLRLSPTPADDYNFNLDDNEGVCDLFDVQILNY. Residues 312-329 form an RBL2 association region; that stretch reads DDYNFNLDDNEGVCDLFD.

It belongs to the E2F/DP family. As to quaternary structure, component of the DRTF1/E2F transcription factor complex. Binds cooperatively with DP-1 to E2F sites. Interaction with retinoblastoma protein RB1 or proteins RBL1 and RBL2 inhibits the E2F transactivation domain. Component of the DREAM complex (also named LINC complex) at least composed of E2F4, E2F5, LIN9, LIN37, LIN52, LIN54, MYBL1, MYBL2, RBL1, RBL2, RBBP4, TFDP1 and TFDP2. The complex exists in quiescent cells where it represses cell cycle-dependent genes. It dissociates in S phase when LIN9, LIN37, LIN52 and LIN54 form a subcomplex that binds to MYBL2.

It localises to the nucleus. Transcriptional activator that binds to E2F sites, these sites are present in the promoter of many genes whose products are involved in cell proliferation. May mediate growth factor-initiated signal transduction. It is likely involved in the early responses of resting cells to growth factor stimulation. Specifically required for multiciliate cell differentiation: together with MCIDAS and E2F5, binds and activate genes required for centriole biogenesis. In Mus musculus (Mouse), this protein is Transcription factor E2F5 (E2f5).